The following is a 59-amino-acid chain: Large ribosomal subunit protein bL32 (59 aa).

The disordered stretch occupies residues 1–59 (MAVQQNKKSPSKRGMHRSHDALTAPALSVDSTTGEVHRPHHISPNGMYRGRKVVKVKGE). Residues 49–59 (RGRKVVKVKGE) are compositionally biased toward basic residues.

The protein belongs to the bacterial ribosomal protein bL32 family.

The sequence is that of Large ribosomal subunit protein bL32 (rpmF) from Neisseria meningitidis serogroup A / serotype 4A (strain DSM 15465 / Z2491).